The chain runs to 413 residues: Eukaryotic initiation factor 4A-14 (413 aa).

Positions 40 to 68 (DSFDAMGLQENLLRGIYAYGFEKPSAIQQ) match the Q motif motif. The 171-residue stretch at 71–241 (IVPFCKGLDV…RKFMSKPVRI (171 aa)) folds into the Helicase ATP-binding domain. Position 84–91 (84–91 (AQSGTGKT)) interacts with ATP. The DEAD box motif lies at 189–192 (DEAD). One can recognise a Helicase C-terminal domain in the interval 252-413 (GIKQFYVNVD…ELPANVADLL (162 aa)).

This sequence belongs to the DEAD box helicase family. eIF4A subfamily. In terms of assembly, eIF4F is a multi-subunit complex, the composition of which varies with external and internal environmental conditions. It is composed of at least EIF4A, EIF4E and EIF4G.

The enzyme catalyses ATP + H2O = ADP + phosphate + H(+). ATP-dependent RNA helicase which is a subunit of the eIF4F complex involved in cap recognition and is required for mRNA binding to ribosome. In the current model of translation initiation, eIF4A unwinds RNA secondary structures in the 5'-UTR of mRNAs which is necessary to allow efficient binding of the small ribosomal subunit, and subsequent scanning for the initiator codon. This Nicotiana tabacum (Common tobacco) protein is Eukaryotic initiation factor 4A-14.